The sequence spans 279 residues: Replication protein A 32 kDa subunit A (279 aa).

The interval 1–33 is disordered; sequence MFSSSQFEPNSGFSGGGFMSSQPSQAYESSSST. Low complexity predominate over residues 19–32; it reads MSSQPSQAYESSSS. A DNA-binding region (OB) is located at residues 73 to 148; that stretch reads VSLVGLVCDK…QLLVFSVRPI (76 aa).

Belongs to the replication factor A protein 2 family. Heterotrimer of RPA1, RPA2 and RPA3 (canonical replication protein A complex). Interacts with ROS1. Binds to ASE1/At3g02920, PDX2, At5g62350, RPA1A/At2g06510, ARF1/At1g10630, At4g18590 and At3g52630. In terms of processing, phosphorylated in a cell-cycle-dependent manner (from the S phase until mitosis). In response to DNA damage, recruited to DNA-repair nuclear foci, as a hypophosphorylated form. Strongly expressed in shoot and root meristems. Present in seedlings, roots, leaves, siliques and flowers.

Its subcellular location is the nucleus. In terms of biological role, component of the replication protein A complex (RPA) required for DNA recombination, repair and replication. The activity of RPA is mediated by single-stranded DNA binding and protein interactions. Required fo cell division in meristems. Involved in the maintenance of transcriptional epigenetic gene silencing (TGS) at specific loci (including some transposons) by regulating histone H3 acetylation, 'Lys-4' and 'Lys-9' methylation. In Arabidopsis thaliana (Mouse-ear cress), this protein is Replication protein A 32 kDa subunit A (RPA2A).